Consider the following 333-residue polypeptide: Protein FanF (333 aa).

Positions 1 to 22 (MKNKYNLLFFLFLLCYGDVALA) are cleaved as a signal peptide.

Post-translationally, three disulfide bonds are present.

It is found in the fimbrium. Functionally, minor component of K99 fimbriae. Is not required for binding of K99 fimbriae to the ganglioside receptor. May play a role in initiation, elongation and flexibility of the fimbriae. This is Protein FanF (fanF) from Escherichia coli.